The following is a 94-amino-acid chain: uncharacterized protein (94 aa).

The N-terminal stretch at 1 to 26 is a signal peptide; that stretch reads MNDQRDQAVPWATGLAVAGFVAAVIA. Transmembrane regions (helical) follow at residues 42–62 and 71–91; these read LLAV…LWGW and FVLG…ALTL.

It is found in the cell membrane. This is an uncharacterized protein from Mycobacterium tuberculosis (strain CDC 1551 / Oshkosh).